We begin with the raw amino-acid sequence, 279 residues long: Alcohol dehydrogenase-related 31 kDa protein (279 aa).

11-34 contributes to the NAD(+) binding site; sequence YVADCGGIALETSKVLMTKNIAKL. Ser139 serves as a coordination point for substrate. The Proton acceptor role is filled by Tyr152.

The protein belongs to the short-chain dehydrogenases/reductases (SDR) family.

The sequence is that of Alcohol dehydrogenase-related 31 kDa protein (Adhr) from Drosophila madeirensis (Fruit fly).